A 1136-amino-acid chain; its full sequence is Unconventional myosin-Ib (1136 aa).

One can recognise a Myosin motor domain in the interval 15-701 (IGVGDTVLLE…TLFQLEDLRK (687 aa)). Ser60 is modified (phosphoserine). 108–115 (GESGAGKT) is an ATP binding site. A Glycyl lysine isopeptide (Lys-Gly) (interchain with G-Cter in SUMO1); alternate cross-link involves residue Lys287. A Glycyl lysine isopeptide (Lys-Gly) (interchain with G-Cter in SUMO2); alternate cross-link involves residue Lys287. An actin-binding region spans residues 592–599 (YIRCIKPN). IQ domains follow at residues 704–729 (LEDLATLIQKIYRGWKCRTHFLLMKR), 730–750 (SQVVIAAWYRRYAQQKRYQQI), 750–778 (IKSSALVIQSYIRGWKARKILRELKHQKR), 780–807 (KEAATTIAAYWHGTQARKERRRLKDEAR), 808–837 (NKHAIAVIWAFWLGSKARRELKRLKEEARR), and 837–866 (RKHAVAVIWAYWLGLKVRREYRKFFRANAG). One can recognise a TH1 domain in the interval 952 to 1136 (KALYPSSVGQ…NNRLLEVAVP (185 aa)).

It belongs to the TRAFAC class myosin-kinesin ATPase superfamily. Myosin family.

In terms of biological role, motor protein that may participate in process critical to neuronal development and function such as cell migration, neurite outgrowth and vesicular transport. This Rattus norvegicus (Rat) protein is Unconventional myosin-Ib (Myo1b).